A 41-amino-acid polypeptide reads, in one-letter code: Large ribosomal subunit protein bL36 (41 aa).

Belongs to the bacterial ribosomal protein bL36 family.

In Jannaschia sp. (strain CCS1), this protein is Large ribosomal subunit protein bL36.